Here is a 180-residue protein sequence, read N- to C-terminus: Large ribosomal subunit protein bL17 (180 aa).

The tract at residues alanine 134–asparagine 180 is disordered.

The protein belongs to the bacterial ribosomal protein bL17 family. In terms of assembly, part of the 50S ribosomal subunit. Contacts protein L32.

This is Large ribosomal subunit protein bL17 from Mycobacterium tuberculosis (strain CDC 1551 / Oshkosh).